The primary structure comprises 157 residues: Probable Brix domain-containing ribosomal biogenesis protein (157 aa).

The Brix domain maps to 1–157 (MLVTSSRKPS…KLNLRGFKKY (157 aa)).

Its function is as follows. Probably involved in the biogenesis of the ribosome. The protein is Probable Brix domain-containing ribosomal biogenesis protein of Methanosarcina barkeri (strain Fusaro / DSM 804).